Reading from the N-terminus, the 228-residue chain is L-ribulose-5-phosphate 4-epimerase UlaF (228 aa).

Substrate contacts are provided by residues 26 to 27, 43 to 44, and 72 to 73; these read GN, SG, and SS. Asp74, His93, and His95 together coordinate Zn(2+). Asp118 acts as the Proton donor/acceptor in catalysis. His167 provides a ligand contact to Zn(2+). Tyr225 functions as the Proton donor/acceptor in the catalytic mechanism.

It belongs to the aldolase class II family. AraD/FucA subfamily. Requires Zn(2+) as cofactor.

The enzyme catalyses L-ribulose 5-phosphate = D-xylulose 5-phosphate. The protein operates within cofactor degradation; L-ascorbate degradation; D-xylulose 5-phosphate from L-ascorbate: step 4/4. Its function is as follows. Catalyzes the isomerization of L-ribulose 5-phosphate to D-xylulose 5-phosphate. Is involved in the anaerobic L-ascorbate utilization. The polypeptide is L-ribulose-5-phosphate 4-epimerase UlaF (Salmonella choleraesuis (strain SC-B67)).